The sequence spans 165 residues: Protein SprT (165 aa).

The 144-residue stretch at 20-163 folds into the SprT-like domain; the sequence is EKLTQANLKL…RCVHCGEQLV (144 aa). His78 provides a ligand contact to Zn(2+). The active site involves Glu79. His82 is a Zn(2+) binding site.

This sequence belongs to the SprT family. It depends on Zn(2+) as a cofactor.

It is found in the cytoplasm. The sequence is that of Protein SprT from Escherichia coli O139:H28 (strain E24377A / ETEC).